The sequence spans 151 residues: Ribonuclease H (151 aa).

An RNase H type-1 domain is found at 1-143 (MEEYVIYTDG…VDRVARKEAA (143 aa)). Residues D9, E48, D71, and D135 each coordinate Mg(2+).

The protein belongs to the RNase H family. In terms of assembly, monomer. It depends on Mg(2+) as a cofactor.

It localises to the cytoplasm. The catalysed reaction is Endonucleolytic cleavage to 5'-phosphomonoester.. Its function is as follows. Endonuclease that specifically degrades the RNA of RNA-DNA hybrids. This is Ribonuclease H from Neorickettsia sennetsu (strain ATCC VR-367 / Miyayama) (Ehrlichia sennetsu).